The sequence spans 749 residues: RNA-binding protein 5-B (749 aa).

The segment at 1 to 88 (MGSDKRVSRS…YHSDGDYMDH (88 aa)) is disordered. The 81-residue stretch at 102–182 (KTIMLRGLPI…KTIAMHYSNP (81 aa)) folds into the RRM 1 domain. The RanBP2-type zinc-finger motif lies at 185 to 214 (KFEDWLCNKCGLYNFRRRLKCFRCGAAKAE). In terms of domain architecture, RRM 2 spans 241–325 (SAIILRNIGP…KTIGVDFAKS (85 aa)). Disordered regions lie at residues 425 to 471 (QMYQ…SVPD), 520 to 558 (PAAD…AQQI), 570 to 595 (NKQK…ESAA), and 626 to 680 (TEEE…NSNI). Residues 429–460 (QPGSPTQSGTSTAASTTPASTTSTEEATTPTA) are compositionally biased toward low complexity. Composition is skewed to basic and acidic residues over residues 585–594 (SRDEERKESA) and 627–648 (EEEK…EKYG). The region spanning 677–723 (NSNIGNKMLQAMGWKEGSGLGRKSQGITAPIQAQVRMRGAGLGAKGS) is the G-patch domain.

It belongs to the RBM5/RBM10 family. Component of the spliceosome A complex (also known as the prespliceosome). Appears to dissociate from the spliceosome upon formation of the spliceosome B complex (also known as the precatalytic spliceosome), in which the heterotrimeric U4/U6.U5 snRNPs are bound.

The protein localises to the nucleus. In terms of biological role, component of the spliceosome A complex. Regulates alternative splicing of a number of mRNAs. May modulate splice site pairing after recruitment of the U1 and U2 snRNPs to the 5' and 3' splice sites of the intron. The sequence is that of RNA-binding protein 5-B (rbm5-b) from Xenopus laevis (African clawed frog).